The primary structure comprises 504 residues: MAMENPFEGKEIWFGVGSQDLYGEEALRQVAQQTGEMVDFLNATGKIPAKIVLKPTLKSSDGVKAFMTEASANPNVIGVITWCHTFSPAKMWIRGLEVLTKPLLQLATQHHKEIPWETIDMDFMNLNQAAHGDREFGYIVSRLGIPRKIVVGHYTDPEVAEKVGTWARACAGWDASQNMKVMRWGDNMRNVAVTEGDKTEAERVFGASINTWAVNDLVAAYEKVKDSQVKDLIEDYKAKYDVAPELLDSRYDELFIAAKEEAAMVNMMRENGCTAGVDNFEDLGTLPQLPGVGPQRFPSEYGWGFSAEGDWKTSVLVRIGAVMGYGLEGGASLMEDYSYNFVPGNEFDMGSHMLEVSPSIGTIAKPKLAIYPLGIGGKSDPVRLVFSGKPADAVVVSMADERERFRLLMDEVTIVEPQGSLKNLPCARAVWKPKPDLKTAVQCWITAGGSHHTCMTTSVGREAWEDFARIAGVELAVIDENTNARQFEKELELSEMYHRLNNRH.

Mn(2+) contacts are provided by Glu-308, Glu-335, His-352, and His-452.

It belongs to the arabinose isomerase family. Mn(2+) is required as a cofactor.

The enzyme catalyses beta-L-arabinopyranose = L-ribulose. It participates in carbohydrate degradation; L-arabinose degradation via L-ribulose; D-xylulose 5-phosphate from L-arabinose (bacterial route): step 1/3. Catalyzes the conversion of L-arabinose to L-ribulose. This is L-arabinose isomerase from Bifidobacterium adolescentis (strain ATCC 15703 / DSM 20083 / NCTC 11814 / E194a).